The primary structure comprises 382 residues: Mannitol-1-phosphate 5-dehydrogenase (382 aa).

3 to 14 (ALHFGAGNIGRG) is an NAD(+) binding site.

The protein belongs to the mannitol dehydrogenase family.

The enzyme catalyses D-mannitol 1-phosphate + NAD(+) = beta-D-fructose 6-phosphate + NADH + H(+). The sequence is that of Mannitol-1-phosphate 5-dehydrogenase from Klebsiella pneumoniae (strain 342).